Here is a 143-residue protein sequence, read N- to C-terminus: Hemoglobin subunit alpha-2 (143 aa).

At S2 the chain carries N-acetylserine. In terms of domain architecture, Globin spans 2-143 (SLTEKDKAAV…LSLALAEKYR (142 aa)). H60 serves as a coordination point for O2. A heme b-binding site is contributed by H89.

This sequence belongs to the globin family. Hb2 is a heterotetramer of two alpha-2 chains and two beta-1 chains; Hb3 is a heterotetramer of two alpha-2 chains and two beta-2 chains. As to expression, red blood cells.

In terms of biological role, involved in oxygen transport from gills to the various peripheral tissues. This is Hemoglobin subunit alpha-2 (hba2) from Anarhichas minor (Arctic spotted wolffish).